The primary structure comprises 102 residues: Circadian clock oscillator protein KaiB (102 aa).

This sequence belongs to the KaiB family. In terms of assembly, undergoes a major conformational rearrangment; in the free state forms homotetramers with 2 dimers. When bound to the CI domain of KaiC switches to a monomeric thioredoxin-fold (KaiB(fs)). Monomers, homodimers and homotetramers are detected in solution; at low concentrations only monomers are seen. In vitro forms KaiC(6):KaiB(1) and KaiC(6):KaiB(6) complexes. Only associates with 'Ser-431'-phosphorylated KaiC (and not with doubly phosphorylated KaiC). Complex formation between KaiB and KaiC is regulated by the phosphorylation state of KaiC and by an ATP hydrolysis-driven conformation change in the CI ring of KaiC; complex formation is slow. Slow complex formation is crucial for the timing of the circadian period. In low resolution cryo-EM forms a KaiC(6):KaiB(6) complex. The KaiABC complex composition changes during the circadian cycle to control KaiC phosphorylation. Complexes KaiC(6), KaiA(2-4):KaiC(6), KaiB(6):KaiC(6) and KaiC(6):KaiB(6):KaiA(12) are among the most important forms, many form cooperatively. The KaiB:KaiC complex is more prevalent at 16 hours (in the dark) than at 4 hours (in the light) in the circadian cycle. The KaiA:KaiB complex is only found at 20-24 hours in the circadian cycle (subjective night). Binds to the CI domain of KaiC; SasA and KaiB compete to bind to the CI domain.

The protein localises to the cytoplasm. Its subcellular location is the cell membrane. Functionally, key component of the KaiABC oscillator complex, which constitutes the main circadian regulator in cyanobacteria. Complex composition changes during the circadian cycle to control KaiC phosphorylation. KaiA stimulates KaiC autophosphorylation, while KaiB sequesters KaiA, leading to KaiC autodephosphorylation. KaiA binding to the KaiC CII domain yields KaiA(2-4):KaiC(6) complexes which stimulate KaiC autophosphorylation. Phospho-Ser-431 KaiC accumulation triggers binding of KaiB to form the KaiB(6):KaiC(6) complex, leading to changes in the output regulators CikA and SasA. KaiB switches to a thioredoxin-like fold (KaiB(fs)) in complex with KaiC. KaiB(6):KaiC(6) formation exposes a site for KaiA binding that sequesters KaiA from the CII domain, making the KaiC(6):KaiB(6):KaiA(12) complex that results in KaiC autodephosphorylation. Complete dephosphorylation of KaiC leads to dissociation of KaiA(2):KaiB(1), completing 1 cycle of the Kai oscillator. Circadian oscillations can be generated in vitro by incubating KaiA, KaiB and KaiC with 1 mM ATP. The cycle is self-sustainable for at least 3 cycles and resistant to temperature changes. A very robust clock is reconstituted with KaiA, KaiB, KaiC, SasA, CikA and RpaA; output is measured by transcription from an appropriate reporter. In terms of biological role, a metamorphic protein which reversibly switches between an inactive tetrameric fold and a rare, thioredoxin-like monomeric fold (KaiB(fs)). KaiB(fs) binds phospho-KaiC, KaiA and CikA. KaiA and CikA compete for binding to KaiB(fs), and KaiB(fs) and SasA compete for binding to KaiC, thus the clock oscillator and output signal pathway are tightly coupled. In Synechococcus elongatus (strain ATCC 33912 / PCC 7942 / FACHB-805) (Anacystis nidulans R2), this protein is Circadian clock oscillator protein KaiB.